The following is an 82-amino-acid chain: Large ribosomal subunit protein uL23 (82 aa).

Belongs to the universal ribosomal protein uL23 family. As to quaternary structure, part of the 50S ribosomal subunit. Contacts protein L29.

In terms of biological role, binds to 23S rRNA. One of the proteins that surrounds the polypeptide exit tunnel on the outside of the ribosome. The polypeptide is Large ribosomal subunit protein uL23 (Sulfurisphaera tokodaii (strain DSM 16993 / JCM 10545 / NBRC 100140 / 7) (Sulfolobus tokodaii)).